Reading from the N-terminus, the 46-residue chain is Large ribosomal subunit protein bL36B (46 aa).

The protein belongs to the bacterial ribosomal protein bL36 family.

The sequence is that of Large ribosomal subunit protein bL36B from Enterobacter sp. (strain 638).